A 249-amino-acid chain; its full sequence is Cysteine desulfuration protein SufE (249 aa).

Cys154 functions as the Cysteine persulfide intermediate in the catalytic mechanism.

It belongs to the SufE family. As to quaternary structure, monomer. Interacts with SufS; interaction enhances cysteine desulfurase activity of SufS. In terms of processing, proteolytically cleaved.

It localises to the plastid. The protein localises to the apicoplast. The protein operates within cofactor biosynthesis; iron-sulfur cluster biosynthesis. Functionally, participates in sulfur mobilization (SUF) pathway for iron-sulfur (Fe-S) cluster biogenesis. Enhances cysteine desulfurase activity of SufS. Probably functions as a sulfur acceptor for SufS. This chain is Cysteine desulfuration protein SufE, found in Plasmodium falciparum (isolate 3D7).